The primary structure comprises 291 residues: Pca regulon regulatory protein (291 aa).

Positions 1–22 are disordered; it reads MSDETLVNDPVNPEPARPASAA. The 61-residue stretch at 45 to 105 folds into the HTH iclR-type domain; the sequence is MTSLARGLAV…SDGRTYSLLP (61 aa). The segment at residues 67-86 is a DNA-binding region (H-T-H motif); it reads IAQISHRTEIPRAAVRRCLH. The region spanning 120–291 is the IclR-ED domain; it reads LAISAQPYLD…SRDLCHQLFG (172 aa).

Positive regulator of all genes within the pca regulon, pcaBDC, pcaIJ and pcaF. Also required for the chemotactic response to aromatic compounds. The chain is Pca regulon regulatory protein (pcaR) from Pseudomonas putida (Arthrobacter siderocapsulatus).